Reading from the N-terminus, the 174-residue chain is Repair DNA polymerase X (174 aa).

Residues Arg-42–Asp-51 are involved in ssDNA binding. The Mg(2+) site is built by Asp-49 and Asp-51. A disulfide bridge links Cys-81 with Cys-86. Residue Asp-100 participates in Mg(2+) binding.

Belongs to the DNA polymerase type-X family. It depends on Mg(2+) as a cofactor.

Its subcellular location is the virion. It carries out the reaction DNA(n) + a 2'-deoxyribonucleoside 5'-triphosphate = DNA(n+1) + diphosphate. Error-prone polymerase lacking a proofreading 3'-5' exonuclease which catalyzes the gap-filling reaction during the DNA repair process. Specifically binds intermediates in the single-nucleotide base-excision repair process. Also catalyzes DNA polymerization with low nucleotide-insertion fidelity. Probably acts as a strategic DNA mutase, which gives rise to a rapid emergence of variants. Generates mismatched G-G pairs, in that case, the polymerase first binds the deoxynucleotide followed by mismatch formation. Together with the viral DNA ligase, fills the single nucleotide gaps generated by the AP endonuclease. Binds DNA with high affinity via the helix alphaE. This Ornithodoros (relapsing fever ticks) protein is Repair DNA polymerase X.